Consider the following 306-residue polypeptide: MQPPGDDAAPRCPFAGAHAPDAPHVPEAAGDDAQAGWHRAQLDFSQSMSYGDYLSLDPILDAQHPRSPDHNEMLFIIQHQTSELWMKLALYELRAALASIRDDALPPAFKMLARVSRVLEQLVQAWNVLATMTPSEYSAMRPYLGASSGFQSYQYRELEFILGNKNAQMLRPHAHRPAIHAHLEASLQAPSLYDEVIRLLARRGFPIAPERLDADWTQPTRHDRTVEAAWLAVYREPNAHWELYEMAEELVDLEDAFRQWRFRHVTTVERIIGFKQGTGGTSGAPYLRKMLDVVLFPELWHVRTTL.

Positions 1-33 (MQPPGDDAAPRCPFAGAHAPDAPHVPEAAGDDA) are disordered. Substrate is bound by residues 75-79 (FIIQH), Y137, and R141. H264 is a binding site for heme. T278 contacts substrate.

Belongs to the tryptophan 2,3-dioxygenase family. As to quaternary structure, homotetramer. Heme serves as cofactor.

It carries out the reaction L-tryptophan + O2 = N-formyl-L-kynurenine. The protein operates within amino-acid degradation; L-tryptophan degradation via kynurenine pathway; L-kynurenine from L-tryptophan: step 1/2. In terms of biological role, heme-dependent dioxygenase that catalyzes the oxidative cleavage of the L-tryptophan (L-Trp) pyrrole ring and converts L-tryptophan to N-formyl-L-kynurenine. Catalyzes the oxidative cleavage of the indole moiety. This chain is Tryptophan 2,3-dioxygenase, found in Burkholderia pseudomallei (strain 1106a).